The following is a 402-amino-acid chain: Zinc finger protein 586 (402 aa).

Positions 15–87 (VTFEDVAVNF…DQGGHSGERP (73 aa)) constitute a KRAB domain. The C2H2-type 1; degenerate zinc-finger motif lies at 88 to 116 (YECGEYRKLFKNKSCLTEPRRDHKHRNVR). The segment at 122–144 (YECSKYGKLFHQKPTLHIHERFH) adopts a C2H2-type 2; degenerate zinc-finger fold. The C2H2-type 3; degenerate zinc-finger motif lies at 150-172 (YECSECGKSFHQSSSLLQRQTLH). C2H2-type zinc fingers lie at residues 178-200 (YECI…RKVH), 206-228 (YECN…RRIH), 234-256 (YECS…LRVH), 262-284 (YECV…QRVH), 290-312 (YECS…QRVH), 317-339 (HECG…LRVH), 345-367 (YECS…LRVH), and 373-395 (YECI…QRVH).

This sequence belongs to the krueppel C2H2-type zinc-finger protein family.

The protein localises to the nucleus. Functionally, may be involved in transcriptional regulation. The sequence is that of Zinc finger protein 586 (ZNF586) from Homo sapiens (Human).